The following is a 283-amino-acid chain: Formamidopyrimidine-DNA glycosylase (283 aa).

P2 acts as the Schiff-base intermediate with DNA in catalysis. The active-site Proton donor is the E3. The Proton donor; for beta-elimination activity role is filled by K58. H100, R119, and R162 together coordinate DNA. The FPG-type zinc finger occupies D247–R283. The Proton donor; for delta-elimination activity role is filled by R273.

This sequence belongs to the FPG family. As to quaternary structure, monomer. Requires Zn(2+) as cofactor.

It catalyses the reaction Hydrolysis of DNA containing ring-opened 7-methylguanine residues, releasing 2,6-diamino-4-hydroxy-5-(N-methyl)formamidopyrimidine.. It carries out the reaction 2'-deoxyribonucleotide-(2'-deoxyribose 5'-phosphate)-2'-deoxyribonucleotide-DNA = a 3'-end 2'-deoxyribonucleotide-(2,3-dehydro-2,3-deoxyribose 5'-phosphate)-DNA + a 5'-end 5'-phospho-2'-deoxyribonucleoside-DNA + H(+). Involved in base excision repair of DNA damaged by oxidation or by mutagenic agents. Acts as a DNA glycosylase that recognizes and removes damaged bases. Has a preference for oxidized purines, such as 7,8-dihydro-8-oxoguanine (8-oxoG). Has AP (apurinic/apyrimidinic) lyase activity and introduces nicks in the DNA strand. Cleaves the DNA backbone by beta-delta elimination to generate a single-strand break at the site of the removed base with both 3'- and 5'-phosphates. This Ruegeria pomeroyi (strain ATCC 700808 / DSM 15171 / DSS-3) (Silicibacter pomeroyi) protein is Formamidopyrimidine-DNA glycosylase.